A 434-amino-acid chain; its full sequence is Nicotinate phosphoribosyltransferase (434 aa).

His-242 is subject to Phosphohistidine; by autocatalysis.

Belongs to the NAPRTase family. Post-translationally, transiently phosphorylated on a His residue during the reaction cycle. Phosphorylation strongly increases the affinity for substrates and increases the rate of nicotinate D-ribonucleotide production. Dephosphorylation regenerates the low-affinity form of the enzyme, leading to product release.

The enzyme catalyses nicotinate + 5-phospho-alpha-D-ribose 1-diphosphate + ATP + H2O = nicotinate beta-D-ribonucleotide + ADP + phosphate + diphosphate. The protein operates within cofactor biosynthesis; NAD(+) biosynthesis; nicotinate D-ribonucleotide from nicotinate: step 1/1. Functionally, catalyzes the synthesis of beta-nicotinate D-ribonucleotide from nicotinate and 5-phospho-D-ribose 1-phosphate at the expense of ATP. This is Nicotinate phosphoribosyltransferase from Brucella abortus (strain S19).